A 377-amino-acid polypeptide reads, in one-letter code: Phosphatidylglycerol--prolipoprotein diacylglyceryl transferase (377 aa).

Transmembrane regions (helical) follow at residues P18–V38, M48–A68, I93–L113, and G119–I139. R141 is an a 1,2-diacyl-sn-glycero-3-phospho-(1'-sn-glycerol) binding site. The next 3 membrane-spanning stretches (helical) occupy residues Q177–V197, L208–I228, and R238–V258. Positions D265–T377 are disordered. Low complexity-rich tracts occupy residues A288 to R297 and G308 to G344.

This sequence belongs to the Lgt family.

The protein localises to the cell membrane. It catalyses the reaction L-cysteinyl-[prolipoprotein] + a 1,2-diacyl-sn-glycero-3-phospho-(1'-sn-glycerol) = an S-1,2-diacyl-sn-glyceryl-L-cysteinyl-[prolipoprotein] + sn-glycerol 1-phosphate + H(+). It functions in the pathway protein modification; lipoprotein biosynthesis (diacylglyceryl transfer). Its function is as follows. Catalyzes the transfer of the diacylglyceryl group from phosphatidylglycerol to the sulfhydryl group of the N-terminal cysteine of a prolipoprotein, the first step in the formation of mature lipoproteins. The chain is Phosphatidylglycerol--prolipoprotein diacylglyceryl transferase from Frankia alni (strain DSM 45986 / CECT 9034 / ACN14a).